Consider the following 473-residue polypeptide: Photosystem II CP43 reaction center protein (473 aa).

Positions 1-14 (MKTLYSLRRFYHVE) are excised as a propeptide. T15 is modified (N-acetylthreonine). Residue T15 is modified to Phosphothreonine. 5 helical membrane-spanning segments follow: residues 69–93 (LFEV…PHLA), 134–155 (LLGP…KDRN), 178–200 (KALY…RKIT), 255–275 (KPFA…LSYS), and 291–312 (WFNN…ASQA). Position 367 (E367) interacts with [CaMn4O5] cluster. The chain crosses the membrane as a helical span at residues 447–471 (RARAAAAGFEKGIDRDFEPVLSMTP).

Belongs to the PsbB/PsbC family. PsbC subfamily. PSII is composed of 1 copy each of membrane proteins PsbA, PsbB, PsbC, PsbD, PsbE, PsbF, PsbH, PsbI, PsbJ, PsbK, PsbL, PsbM, PsbT, PsbX, PsbY, PsbZ, Psb30/Ycf12, at least 3 peripheral proteins of the oxygen-evolving complex and a large number of cofactors. It forms dimeric complexes. Binds multiple chlorophylls and provides some of the ligands for the Ca-4Mn-5O cluster of the oxygen-evolving complex. It may also provide a ligand for a Cl- that is required for oxygen evolution. PSII binds additional chlorophylls, carotenoids and specific lipids. is required as a cofactor.

The protein localises to the plastid. Its subcellular location is the chloroplast thylakoid membrane. Functionally, one of the components of the core complex of photosystem II (PSII). It binds chlorophyll and helps catalyze the primary light-induced photochemical processes of PSII. PSII is a light-driven water:plastoquinone oxidoreductase, using light energy to abstract electrons from H(2)O, generating O(2) and a proton gradient subsequently used for ATP formation. This Atropa belladonna (Belladonna) protein is Photosystem II CP43 reaction center protein.